The sequence spans 336 residues: F420-dependent glucose-6-phosphate dehydrogenase (336 aa).

Residue Asp-37 participates in coenzyme F420-(gamma-Glu)n binding. Residue His-38 is the Proton donor of the active site. Coenzyme F420-(gamma-Glu)n is bound by residues Thr-74 and 105–106 (SG). Catalysis depends on Glu-107, which acts as the Proton acceptor. Coenzyme F420-(gamma-Glu)n-binding positions include Asn-110, 173-174 (SG), and 176-177 (SA). Thr-191, Lys-194, Lys-255, and Arg-279 together coordinate substrate.

Belongs to the F420-dependent glucose-6-phosphate dehydrogenase family. Homodimer.

It catalyses the reaction oxidized coenzyme F420-(gamma-L-Glu)(n) + D-glucose 6-phosphate + H(+) = 6-phospho-D-glucono-1,5-lactone + reduced coenzyme F420-(gamma-L-Glu)(n). Its function is as follows. Catalyzes the coenzyme F420-dependent oxidation of glucose 6-phosphate (G6P) to 6-phosphogluconolactone. This is F420-dependent glucose-6-phosphate dehydrogenase from Beutenbergia cavernae (strain ATCC BAA-8 / DSM 12333 / CCUG 43141 / JCM 11478 / NBRC 16432 / NCIMB 13614 / HKI 0122).